The chain runs to 329 residues: Serine/threonine-protein phosphatase PP1-alpha (329 aa).

Mn(2+)-binding residues include Asp64, His66, Asp92, and Asn124. His125 (proton donor) is an active-site residue. Residues His173 and His248 each contribute to the Mn(2+) site. The disordered stretch occupies residues 309–329 (GMNSGRPAVGGGRPGTTAGKK).

This sequence belongs to the PPP phosphatase family. PP-1 subfamily. Interacts with lab-1; the interaction is direct. Interacts with knl-1; the interaction is direct. It depends on Mn(2+) as a cofactor.

It carries out the reaction O-phospho-L-seryl-[protein] + H2O = L-seryl-[protein] + phosphate. It catalyses the reaction O-phospho-L-threonyl-[protein] + H2O = L-threonyl-[protein] + phosphate. Its function is as follows. Serine/threonine-protein phosphatase which antagonizes the function of air-2 in the regulation of chromosome cohesion. Dephosphorylates histone H3 at 'Ser-10'. Dephosphorylates translation initiation factor eIF2alpha. Involved in the activation of chloride channel clh-3 during cell swelling and meiotic maturation. In Caenorhabditis briggsae, this protein is Serine/threonine-protein phosphatase PP1-alpha (gsp-1).